The sequence spans 416 residues: Coenzyme F420H(2) oxidase (416 aa).

Residues His-87, Glu-89, Asp-91, His-92, His-155, Asp-174, and His-239 each contribute to the Fe cation site. The 142-residue stretch at 266-407 (AVIVYDTMHY…NCYNMGKELA (142 aa)) folds into the Flavodoxin-like domain. FMN contacts are provided by residues 272–277 (TMHYST), 324–327 (TIYD), and 359–364 (SMGGEG).

In the N-terminal section; belongs to the zinc metallo-hydrolase group 3 family. FMN serves as cofactor. Requires Fe cation as cofactor.

It catalyses the reaction 2 reduced coenzyme F420-(gamma-L-Glu)(n) + O2 = 2 oxidized coenzyme F420-(gamma-L-Glu)(n) + 2 H2O + 2 H(+). Functionally, catalyzes the oxidation of F420H(2) with O(2). May be involved in O(2) detoxification, reducing the intracellular O(2) concentration to a level allowing growth at the expense of methane formation. The protein is Coenzyme F420H(2) oxidase (fprA) of Methanocaldococcus jannaschii (strain ATCC 43067 / DSM 2661 / JAL-1 / JCM 10045 / NBRC 100440) (Methanococcus jannaschii).